The sequence spans 705 residues: Choline transporter-like protein 2 (705 aa).

The Cytoplasmic segment spans residues 1-33 (MGKDSQHYYGKHGTPQKYDPTFKGPIYNRGCTD). Position 14 is a phosphothreonine (T14). A helical membrane pass occupies residues 34-54 (IICCVLLFLAIVGYVAVGIIA). Over 55–232 (WTHGDPRKVI…QIFEDYTVSW (178 aa)) the chain is Extracellular. Residues N187 and N200 are each glycosylated (N-linked (GlcNAc...) asparagine). Residues 233–253 (YWIVIGLVIAMLLSLMFIVLL) traverse the membrane as a helical segment. The Cytoplasmic segment spans residues 254–256 (RFL). The chain crosses the membrane as a helical span at residues 257–277 (AGVMVWVMIVMVILVLGYGIF). The Extracellular segment spans residues 278–315 (HCYAEYSRLRGEAGSDVSLVDLGFQTDLRVYLHLRQTW). Residues 316 to 336 (MAFMIILSILEVVIILLLIFL) traverse the membrane as a helical segment. The Cytoplasmic portion of the chain corresponds to 337-364 (RKRILIAIALIKEASRAVGHVMCSMLYP). A helical transmembrane segment spans residues 365 to 385 (LVTFFLLCLCIAYWASTSVFL). Residues 386–453 (STSNVAVYKI…LQIFNAFMFF (68 aa)) lie on the Extracellular side of the membrane. Residue N416 is glycosylated (N-linked (GlcNAc...) asparagine). A helical transmembrane segment spans residues 454–476 (WLANFVLALGQVTLAGAFASYYW). Residues 477–503 (AMRKPDDMPAFPLFSAFGRALRYHTGS) lie on the Cytoplasmic side of the membrane. Residues 504–524 (LAFGSLILAIVQIIRVMLEYL) traverse the membrane as a helical segment. Residues 525–562 (DQRLKAAQNKFAKFLMVCLKCCFWCLEKFIKFLNRNAY) are Extracellular-facing. A helical membrane pass occupies residues 563-583 (IMIAIYGTNFCTSARNAFFLL). Residues 584-598 (MRNIIRVAVLDKVTD) lie on the Cytoplasmic side of the membrane. A helical membrane pass occupies residues 599–619 (FLFLLGKLLIVGSVGILAFFF). The Extracellular portion of the chain corresponds to 620-637 (FTHRIRIVQDTAPPLNYY). Residues 638-658 (WVPILTVIIGSYLIAHGFFSV) traverse the membrane as a helical segment. At 659 to 705 (YGMCVDTLFLCFLEDLERNDGSAERPYFMSSTLKKLLNKTNKKVAES) the chain is on the cytoplasmic side.

Belongs to the CTL (choline transporter-like) family. Interacts with COCH. Post-translationally, N-glycosylated.

It is found in the cell membrane. Its subcellular location is the mitochondrion outer membrane. It carries out the reaction choline(out) + n H(+)(in) = choline(in) + n H(+)(out). The catalysed reaction is ethanolamine(out) + n H(+)(in) = ethanolamine(in) + n H(+)(out). Its function is as follows. Exhibits choline transporter activity, as choline/H+ antiporter. Also acts as a low-affinity ethanolamine/H+ antiporter, regulating the supply of extracellular ethanolamine (Etn) for the CDP-Etn pathway, redistribute intracellular Etn and balance the CDP-Cho and CDP-Etn arms of the Kennedy pathway. The chain is Choline transporter-like protein 2 (Slc44a2) from Rattus norvegicus (Rat).